Consider the following 65-residue polypeptide: Antimicrobial peptide THP1 (65 aa).

The first 25 residues, 1–25 (MRIVYLLFPFILLLAQGAAGSSLAL), serve as a signal peptide directing secretion. Disulfide bonds link Cys31–Cys53, Cys38–Cys59, and Cys43–Cys60. Residues 61-65 (KTLLG) constitute a propeptide that is removed on maturation.

This sequence belongs to the beta-defensin family.

The protein localises to the secreted. Bactericidal activity; inhibits S.aureus and E.coli. The protein is Antimicrobial peptide THP1 of Meleagris gallopavo (Wild turkey).